The primary structure comprises 117 residues: Swarming motility protein SwrAA (117 aa).

It is found in the cytoplasm. Its function is as follows. Required for swarm cell differentiation. Plays a crucial role in regulating the degree of cell flagellation. The chain is Swarming motility protein SwrAA (swrAA) from Bacillus subtilis (strain 168).